Consider the following 247-residue polypeptide: E3 ubiquitin-protein ligase RNF182 (247 aa).

The RING-type zinc-finger motif lies at 20–68; the sequence is CKICYNRYNLKQRKPKVLECCHRVCAKCLYKIIDFGDSPQGVIVCPFCR. The next 2 helical transmembrane spans lie at 184–204 and 211–231; these read VLVW…IYLL and LGVV…VYGF.

In terms of assembly, interacts with ATP6V0C. In terms of tissue distribution, up-regulated in neuronal cells subjected to cell death-inducing injuries, such as oxygen and glucose deprivation (at protein level). Could be up-regulated in Alzheimer disease brains. Highly expressed in innate immune organs such as lymph nodes and spleen and in immune cells such as macrophages and dendritic cells.

It localises to the membrane. The protein localises to the cytoplasm. It carries out the reaction S-ubiquitinyl-[E2 ubiquitin-conjugating enzyme]-L-cysteine + [acceptor protein]-L-lysine = [E2 ubiquitin-conjugating enzyme]-L-cysteine + N(6)-ubiquitinyl-[acceptor protein]-L-lysine.. It functions in the pathway protein modification; protein ubiquitination. In terms of biological role, E3 ubiquitin-protein ligase that mediates the ubiquitination of ATP6V0C and targets it to degradation via the ubiquitin-proteasome pathway. Also plays a role in the inhibition of TLR-triggered innate immune response by mediating 'Lys'-48-linked ubiquitination and subsequent degradation of NF-kappa-B component RELA. In Homo sapiens (Human), this protein is E3 ubiquitin-protein ligase RNF182 (RNF182).